The primary structure comprises 313 residues: Protoheme IX farnesyltransferase (313 aa).

A run of 8 helical transmembrane segments spans residues 32-52 (VMSL…GDFH), 53-73 (PVLA…AGAL), 120-140 (ILVN…YVVI), 153-173 (IVIG…AVTG), 180-200 (LLLF…LALF), 226-246 (ILLY…LGYF), 248-268 (AIYG…ALRV), and 284-304 (LFKF…LEVV).

Belongs to the UbiA prenyltransferase family. Protoheme IX farnesyltransferase subfamily.

The protein localises to the cell inner membrane. It catalyses the reaction heme b + (2E,6E)-farnesyl diphosphate + H2O = Fe(II)-heme o + diphosphate. Its pathway is porphyrin-containing compound metabolism; heme O biosynthesis; heme O from protoheme: step 1/1. Its function is as follows. Converts heme B (protoheme IX) to heme O by substitution of the vinyl group on carbon 2 of heme B porphyrin ring with a hydroxyethyl farnesyl side group. This is Protoheme IX farnesyltransferase from Rhodopseudomonas palustris (strain HaA2).